The chain runs to 160 residues: Envelope glycoprotein L (160 aa).

Residues 1-22 (MASHKWLLQMIVFLKTITIAYC) form the signal peptide. The interval 24–149 (HLQDDTPLFF…TNIPENGCVW (126 aa)) is interaction with gH. The gL alphaherpesvirus-type domain maps to 28–160 (DTPLFFGAKP…ADRLFQRVCQ (133 aa)). Intrachain disulfides connect Cys-49–Cys-80 and Cys-147–Cys-159.

Belongs to the herpesviridae glycoprotein L (gL) family. Alphaherpesvirinae gL subfamily. Interacts with glycoprotein H (gH); this interaction is necessary for the correct processing and cell surface expression of gH. The heterodimer gH/gL seems to interact with gB trimers during fusion.

It localises to the virion membrane. The protein localises to the host cell membrane. The protein resides in the host Golgi apparatus. It is found in the host trans-Golgi network. In terms of biological role, the heterodimer glycoprotein H-glycoprotein L is required for the fusion of viral and plasma membranes leading to virus entry into the host cell. Acts as a functional inhibitor of gH and maintains gH in an inhibited form. Upon binding to host integrins, gL dissociates from gH leading to activation of the viral fusion glycoproteins gB and gH. The polypeptide is Envelope glycoprotein L (Varicella-zoster virus (strain Oka vaccine) (HHV-3)).